A 308-amino-acid polypeptide reads, in one-letter code: uncharacterized protein (308 aa).

The tract at residues 158 to 221 (GDSNAETFEE…DSINHGESSE (64 aa)) is disordered. The segment covering 206–221 (RNGDRSDSINHGESSE) has biased composition (basic and acidic residues).

This is an uncharacterized protein from Arabidopsis thaliana (Mouse-ear cress).